Reading from the N-terminus, the 356-residue chain is Peptide chain release factor 1 (356 aa).

Gln-233 is subject to N5-methylglutamine.

Belongs to the prokaryotic/mitochondrial release factor family. Methylated by PrmC. Methylation increases the termination efficiency of RF1.

Its subcellular location is the cytoplasm. In terms of biological role, peptide chain release factor 1 directs the termination of translation in response to the peptide chain termination codons UAG and UAA. The polypeptide is Peptide chain release factor 1 (Halalkalibacterium halodurans (strain ATCC BAA-125 / DSM 18197 / FERM 7344 / JCM 9153 / C-125) (Bacillus halodurans)).